Here is a 207-residue protein sequence, read N- to C-terminus: Large ribosomal subunit protein uL18 (207 aa).

Belongs to the universal ribosomal protein uL18 family. As to quaternary structure, part of the 50S ribosomal subunit. Contacts the 5S and 23S rRNAs.

This is one of the proteins that bind and probably mediate the attachment of the 5S RNA into the large ribosomal subunit, where it forms part of the central protuberance. This chain is Large ribosomal subunit protein uL18, found in Caldivirga maquilingensis (strain ATCC 700844 / DSM 13496 / JCM 10307 / IC-167).